Here is a 190-residue protein sequence, read N- to C-terminus: Probable nicotinate-nucleotide adenylyltransferase (190 aa).

This sequence belongs to the NadD family.

It catalyses the reaction nicotinate beta-D-ribonucleotide + ATP + H(+) = deamido-NAD(+) + diphosphate. It functions in the pathway cofactor biosynthesis; NAD(+) biosynthesis; deamido-NAD(+) from nicotinate D-ribonucleotide: step 1/1. Its function is as follows. Catalyzes the reversible adenylation of nicotinate mononucleotide (NaMN) to nicotinic acid adenine dinucleotide (NaAD). The protein is Probable nicotinate-nucleotide adenylyltransferase of Borrelia hermsii (strain HS1 / DAH).